Reading from the N-terminus, the 336-residue chain is Dihydroorotate dehydrogenase (quinone) (336 aa).

Residues 62 to 66 and Thr-86 contribute to the FMN site; that span reads AGLDK. Lys-66 is a binding site for substrate. Residue 111–115 coordinates substrate; that stretch reads NRMGF. FMN contacts are provided by Asn-139 and Asn-172. Asn-172 lines the substrate pocket. Ser-175 serves as the catalytic Nucleophile. Position 177 (Asn-177) interacts with substrate. Positions 217 and 245 each coordinate FMN. Position 246-247 (246-247) interacts with substrate; it reads NT. FMN is bound by residues Gly-268, Gly-297, and 318-319; that span reads YS.

This sequence belongs to the dihydroorotate dehydrogenase family. Type 2 subfamily. In terms of assembly, monomer. FMN serves as cofactor.

The protein resides in the cell membrane. The enzyme catalyses (S)-dihydroorotate + a quinone = orotate + a quinol. The protein operates within pyrimidine metabolism; UMP biosynthesis via de novo pathway; orotate from (S)-dihydroorotate (quinone route): step 1/1. Its function is as follows. Catalyzes the conversion of dihydroorotate to orotate with quinone as electron acceptor. The chain is Dihydroorotate dehydrogenase (quinone) from Escherichia coli O17:K52:H18 (strain UMN026 / ExPEC).